A 134-amino-acid chain; its full sequence is Replication enhancer protein (134 aa).

It belongs to the geminiviridae replication enhancer protein family. Homooligomer. Interacts with the replication-associated protein (REP). Interacts with host proliferating cell nuclear antigen (PCNA). Interacts with host retinoblastoma-related protein 1 (RBR1), and may thereby deregulate the host cell cycle. Oligomerization and interaction with PCNA are necessary for optimal replication enhancement.

Increases viral DNA accumulation. Enhances infectivity and symptom expression. The protein is Replication enhancer protein of Nicotiana tabacum (Common tobacco).